Reading from the N-terminus, the 210-residue chain is Large ribosomal subunit protein uL4 (210 aa).

Positions 44 to 77 (ARQGNASSKTRSEVRGGGRKPWRQKGTGRARAGS) are disordered. Over residues 60-71 (GGRKPWRQKGTG) the composition is skewed to basic residues.

This sequence belongs to the universal ribosomal protein uL4 family. In terms of assembly, part of the 50S ribosomal subunit.

Functionally, one of the primary rRNA binding proteins, this protein initially binds near the 5'-end of the 23S rRNA. It is important during the early stages of 50S assembly. It makes multiple contacts with different domains of the 23S rRNA in the assembled 50S subunit and ribosome. Its function is as follows. Forms part of the polypeptide exit tunnel. The polypeptide is Large ribosomal subunit protein uL4 (Microcystis aeruginosa (strain NIES-843 / IAM M-2473)).